The sequence spans 245 residues: 14-3-3 protein zeta (245 aa).

Belongs to the 14-3-3 family. In terms of assembly, homodimer. In terms of tissue distribution, present in all adult tissues examined with the highest levels in the brain.

It localises to the cytoplasm. Functionally, adapter protein implicated in the regulation of a large spectrum of both general and specialized signaling pathways. Binds to a large number of partners, usually by recognition of a phosphoserine or phosphothreonine motif. Binding generally results in the modulation of the activity of the binding partner. The sequence is that of 14-3-3 protein zeta (ywhaz) from Xenopus laevis (African clawed frog).